A 414-amino-acid chain; its full sequence is Patatin-like protein 1 (414 aa).

The PNPLA domain occupies Leu-20–Met-224. The GXGXXG motif lies at Gly-24–Gly-29. The short motif at Gly-62 to Gly-66 is the GXSXG element. Ser-64 functions as the Nucleophile in the catalytic mechanism. The Proton acceptor role is filled by Asp-211. The DGA/G motif lies at Asp-211–Gly-213.

Belongs to the patatin family.

Functionally, possesses non-specific lipolytic acyl hydrolase (LAH) activity. Hydrolyzes phospholipids as well as galactolipids. May play a role in disease resistance. The polypeptide is Patatin-like protein 1 (PLP1) (Oryza sativa subsp. indica (Rice)).